A 213-amino-acid polypeptide reads, in one-letter code: Orotate phosphoribosyltransferase (213 aa).

Position 26 (K26) interacts with 5-phospho-alpha-D-ribose 1-diphosphate. 34-35 (FF) is a binding site for orotate. 5-phospho-alpha-D-ribose 1-diphosphate-binding positions include 72-73 (YK), R99, K100, K103, H105, and 124-132 (DDVITAGTA). Orotate contacts are provided by T128 and R156.

The protein belongs to the purine/pyrimidine phosphoribosyltransferase family. PyrE subfamily. In terms of assembly, homodimer. The cofactor is Mg(2+).

The enzyme catalyses orotidine 5'-phosphate + diphosphate = orotate + 5-phospho-alpha-D-ribose 1-diphosphate. The protein operates within pyrimidine metabolism; UMP biosynthesis via de novo pathway; UMP from orotate: step 1/2. Its function is as follows. Catalyzes the transfer of a ribosyl phosphate group from 5-phosphoribose 1-diphosphate to orotate, leading to the formation of orotidine monophosphate (OMP). The polypeptide is Orotate phosphoribosyltransferase (Pseudomonas syringae pv. syringae (strain B728a)).